The chain runs to 187 residues: Elongation factor P (187 aa).

It belongs to the elongation factor P family.

The protein localises to the cytoplasm. Its pathway is protein biosynthesis; polypeptide chain elongation. Functionally, involved in peptide bond synthesis. Stimulates efficient translation and peptide-bond synthesis on native or reconstituted 70S ribosomes in vitro. Probably functions indirectly by altering the affinity of the ribosome for aminoacyl-tRNA, thus increasing their reactivity as acceptors for peptidyl transferase. This is Elongation factor P from Sphingopyxis alaskensis (strain DSM 13593 / LMG 18877 / RB2256) (Sphingomonas alaskensis).